The primary structure comprises 202 residues: Kunitz-type protein bli-5 (202 aa).

The N-terminal stretch at 1–20 (MVSIHNSFILLMLMISICFC) is a signal peptide. Positions 135 to 184 (CVHPIFDHPDDGYLSRWGFDGEQCIEFKWNPERPSSANNFKTRAHCEDYC) constitute a BPTI/Kunitz inhibitor domain. Disulfide bonds link C135–C184 and C158–C180.

Expressed in larval and adult hypodermis, hermaphrodite vulva and adult excretory cell and duct.

Functionally, appears to lack serine protease inhibitor activity in vitro when tested with bovine pancreatic alpha-chymotrypsin and elastase. Involved in cuticle biosynthesis. In Caenorhabditis elegans, this protein is Kunitz-type protein bli-5.